We begin with the raw amino-acid sequence, 434 residues long: Perilipin-3 (434 aa).

Positions 1 to 22 (MSADGAEADGSTQVTVEEPVQQ) are disordered. Position 2 is an N-acetylserine (S2). S31 carries the phosphoserine modification. At K65 the chain carries N6-acetyllysine. The residue at position 91 (S91) is a Phosphoserine. K122 participates in a covalent cross-link: Glycyl lysine isopeptide (Lys-Gly) (interchain with G-Cter in SUMO1). Phosphoserine is present on residues S130 and S148. At T170 the chain carries Phosphothreonine. A phosphoserine mark is found at S175 and S179. T216 bears the Phosphothreonine mark. 2 positions are modified to phosphoserine: S217 and S241. A Phosphotyrosine modification is found at Y251. 2 coiled-coil regions span residues 252 to 280 (EHSLGKLRATKQRAQEALLQLSQALSLME) and 353 to 377 (TNVKDQVQQARRQVEDLQATFSSIH).

The protein belongs to the perilipin family. In terms of assembly, homooligomer. Interacts with M6PR (via the cytoplasmic domain). Interacts with IGF2R (via the cytoplasmic domain). Post-translationally, phosphorylation at Tyr-251 by isoform 1 of CHKA (CHKalpha2) promotes dissociation from lipid droplets: dissociation is followed by recruitment of autophagosome machinery to lipid droplets and subsequent lipid droplet lipolysis.

It localises to the lipid droplet. The protein resides in the endosome membrane. The protein localises to the cytoplasm. Structural component of lipid droplets, which is required for the formation and maintenance of lipid storage droplets. Required for the transport of mannose 6-phosphate receptors (MPR) from endosomes to the trans-Golgi network. This is Perilipin-3 (PLIN3) from Pongo abelii (Sumatran orangutan).